Reading from the N-terminus, the 335-residue chain is Acyl-CoA Delta(11) desaturase (335 aa).

3 helical membrane-spanning segments follow: residues 39–59 (LLTFGYWHIAGLYGLYLCFTS), 64–84 (TIILALILNEMAILGITAGAH), and 98–118 (LQIILIIFNSLSFQNSAIHWI). Positions 84–89 (HRLWAH) match the Histidine box-1 motif. A Histidine box-2 motif is present at residues 121–125 (HRMHH). A run of 2 helical transmembrane segments spans residues 182–202 (AIPFIGMICFVLPTIIPMYFW) and 213–235 (TMLRYVFSLNSIFLVNSAAHLYG). The short motif at 261-265 (HNYHH) is the Histidine box-3 element. The tract at residues 312–335 (MKRTGDGTDVSGQKYSCESSEVLQ) is disordered. A compositionally biased stretch (polar residues) spans 321 to 335 (VSGQKYSCESSEVLQ).

Belongs to the fatty acid desaturase type 1 family. The cofactor is Fe cation. As to expression, detected in pheromone gland.

It localises to the membrane. The enzyme catalyses an 11,12-saturated fatty acyl-CoA + 2 Fe(II)-[cytochrome b5] + O2 + 2 H(+) = an (11Z)-Delta(11)-fatty acyl-CoA + 2 Fe(III)-[cytochrome b5] + 2 H2O. Its function is as follows. Catalyzes the formation of Delta(11) fatty acyl precursors in the pheromone gland, with a preference for myristic acid. The sequence is that of Acyl-CoA Delta(11) desaturase from Choristoneura rosaceana (Oblique banded leafroller).